A 198-amino-acid polypeptide reads, in one-letter code: Transcription factor BHLH133 (198 aa).

The basic motif; degenerate stretch occupies residues 114–127 (SAESSQSYYAKNRR). Positions 114–163 (SAESSQSYYAKNRRQRINERLRILQELIPNGTKVDISTMLEEAIQYVKFL) constitute a bHLH domain. The tract at residues 128-163 (QRINERLRILQELIPNGTKVDISTMLEEAIQYVKFL) is helix-loop-helix motif.

It belongs to the bHLH protein family.

It is found in the nucleus. Transcription factor that acts as a regulator of iron homeostasis. May act as negative regulator of iron transportation from root to shoot. Does not seem to be involved in the suppression of the induction of iron deficiency responsive genes. This Oryza sativa subsp. japonica (Rice) protein is Transcription factor BHLH133.